The sequence spans 191 residues: Reticulon-like protein B15 (191 aa).

Residues 13-191 (VADLCLWKDK…SKIPRAPKVE (179 aa)) enclose the Reticulon domain. 3 consecutive transmembrane segments (helical) span residues 23–43 (INSG…EFME), 47–67 (VPLL…WAKF), and 122–142 (VAII…YICL).

Its subcellular location is the endoplasmic reticulum membrane. The sequence is that of Reticulon-like protein B15 (RTNLB15) from Arabidopsis thaliana (Mouse-ear cress).